A 105-amino-acid polypeptide reads, in one-letter code: Large ribosomal subunit protein uL24 (105 aa).

The protein belongs to the universal ribosomal protein uL24 family. In terms of assembly, part of the 50S ribosomal subunit.

One of two assembly initiator proteins, it binds directly to the 5'-end of the 23S rRNA, where it nucleates assembly of the 50S subunit. Functionally, one of the proteins that surrounds the polypeptide exit tunnel on the outside of the subunit. This chain is Large ribosomal subunit protein uL24, found in Nitrosomonas europaea (strain ATCC 19718 / CIP 103999 / KCTC 2705 / NBRC 14298).